The sequence spans 211 residues: WW domain-containing protein WWM1 (211 aa).

One can recognise a WW domain in the interval 9–43; it reads PQVPSGWKAVFDDEYQTWYYVDLSTNSSQWEPPRG. The segment at 32 to 116 is disordered; the sequence is STNSSQWEPP…QRYYPQQAPM (85 aa). Glycyl lysine isopeptide (Lys-Gly) (interchain with G-Cter in ubiquitin) cross-links involve residues Lys-50 and Lys-60. Ser-75 carries the post-translational modification Phosphoserine. Phosphothreonine is present on Thr-78. Residues 80 to 116 are compositionally biased toward low complexity; it reads QVQAGAQAQQPRYYQPQQPQYPQYPQQQRYYPQQAPM.

As to quaternary structure, interacts with metacaspase MCA1.

The protein resides in the cytoplasm. It localises to the nucleus. Its subcellular location is the mitochondrion. In terms of biological role, involved in apoptosis. May play a role in nuclear function controlling cellular proliferation coupled to mitochondrial biogenesis. Causes impaired growth when overexpressed. This chain is WW domain-containing protein WWM1 (WWM1), found in Saccharomyces cerevisiae (strain ATCC 204508 / S288c) (Baker's yeast).